A 428-amino-acid chain; its full sequence is MPEQAVKQSHDIDALMMTIGAQAKAASRPLSIAGTDQKNRALLAMASAIEASKEAILAANRKDLAAAESAGLAASFVDRLTLNDARIAGIAEGIRSVAALADPVGEVIAAWDRPNGLKIERVRTPLGVIGVIYESRPNVTADAGALCLKAGNAVILRGGSDSQHSSRAIHACLVQGLRIAGLPENAIQLVPVTDRAAVGALLSGLKGTVDVIVPRGGKSLVARVQSEARVPVFAHLEGICHIYVDKSADLDMAKAIVVNAKMRRTGICGAAETLLVDASAVSSHLEPVVKALLDAGCEVRGSQPVRNVVEGLEAATEEDWRTEYLDAIISVAVVDGISGAIEHIGTYSSNHTEAVIAEDPDVVARFFNELDSAILLHNASTQFADGGEFGMGAEIGIATGKMHARGPVGVEQLTSFKYRVHGTGQTRT.

Belongs to the gamma-glutamyl phosphate reductase family.

The protein localises to the cytoplasm. The enzyme catalyses L-glutamate 5-semialdehyde + phosphate + NADP(+) = L-glutamyl 5-phosphate + NADPH + H(+). It participates in amino-acid biosynthesis; L-proline biosynthesis; L-glutamate 5-semialdehyde from L-glutamate: step 2/2. Catalyzes the NADPH-dependent reduction of L-glutamate 5-phosphate into L-glutamate 5-semialdehyde and phosphate. The product spontaneously undergoes cyclization to form 1-pyrroline-5-carboxylate. In Agrobacterium fabrum (strain C58 / ATCC 33970) (Agrobacterium tumefaciens (strain C58)), this protein is Gamma-glutamyl phosphate reductase.